Reading from the N-terminus, the 513-residue chain is ATP synthase subunit alpha (513 aa).

ATP is bound at residue 169 to 176 (GDRQTGKT).

This sequence belongs to the ATPase alpha/beta chains family. As to quaternary structure, F-type ATPases have 2 components, CF(1) - the catalytic core - and CF(0) - the membrane proton channel. CF(1) has five subunits: alpha(3), beta(3), gamma(1), delta(1), epsilon(1). CF(0) has three main subunits: a(1), b(2) and c(9-12). The alpha and beta chains form an alternating ring which encloses part of the gamma chain. CF(1) is attached to CF(0) by a central stalk formed by the gamma and epsilon chains, while a peripheral stalk is formed by the delta and b chains.

The protein localises to the cell inner membrane. The catalysed reaction is ATP + H2O + 4 H(+)(in) = ADP + phosphate + 5 H(+)(out). Produces ATP from ADP in the presence of a proton gradient across the membrane. The alpha chain is a regulatory subunit. This is ATP synthase subunit alpha from Cupriavidus necator (strain ATCC 17699 / DSM 428 / KCTC 22496 / NCIMB 10442 / H16 / Stanier 337) (Ralstonia eutropha).